Consider the following 334-residue polypeptide: Fructose-1,6-bisphosphatase class 1 (334 aa).

Glu-87, Asp-106, Leu-108, and Asp-109 together coordinate Mg(2+). Substrate-binding positions include 109 to 112 (DGSS), Asn-208, and Lys-274. Residue Glu-280 coordinates Mg(2+).

Belongs to the FBPase class 1 family. In terms of assembly, homotetramer. Requires Mg(2+) as cofactor.

It is found in the cytoplasm. The enzyme catalyses beta-D-fructose 1,6-bisphosphate + H2O = beta-D-fructose 6-phosphate + phosphate. It functions in the pathway carbohydrate biosynthesis; gluconeogenesis. The protein is Fructose-1,6-bisphosphatase class 1 of Psychrobacter sp. (strain PRwf-1).